Here is a 546-residue protein sequence, read N- to C-terminus: Glucose-6-phosphate isomerase (546 aa).

Catalysis depends on Glu357, which acts as the Proton donor. Active-site residues include His389 and Lys509.

The protein belongs to the GPI family.

It localises to the cytoplasm. The catalysed reaction is alpha-D-glucose 6-phosphate = beta-D-fructose 6-phosphate. The protein operates within carbohydrate biosynthesis; gluconeogenesis. It functions in the pathway carbohydrate degradation; glycolysis; D-glyceraldehyde 3-phosphate and glycerone phosphate from D-glucose: step 2/4. Its function is as follows. Catalyzes the reversible isomerization of glucose-6-phosphate to fructose-6-phosphate. The polypeptide is Glucose-6-phosphate isomerase (Anaeromyxobacter dehalogenans (strain 2CP-1 / ATCC BAA-258)).